The primary structure comprises 213 residues: Ribulose-phosphate 3-epimerase (213 aa).

Ser-9 lines the substrate pocket. Residues His-34, Asp-36, and His-66 each contribute to the a divalent metal cation site. Asp-36 serves as the catalytic Proton acceptor. Substrate contacts are provided by residues His-66, 139 to 142 (GFGG), 166 to 168 (DGG), and 186 to 187 (GS). Asp-166 provides a ligand contact to a divalent metal cation. Asp-166 acts as the Proton donor in catalysis.

This sequence belongs to the ribulose-phosphate 3-epimerase family. It depends on Co(2+) as a cofactor. Fe(2+) is required as a cofactor. Mn(2+) serves as cofactor. Requires Zn(2+) as cofactor.

The enzyme catalyses D-ribulose 5-phosphate = D-xylulose 5-phosphate. It participates in carbohydrate degradation; pentose phosphate pathway; D-xylulose 5-phosphate from D-ribulose 5-phosphate (non-oxidative stage): step 1/1. In terms of biological role, catalyzes the reversible epimerization of D-ribulose 5-phosphate to D-xylulose 5-phosphate. The sequence is that of Ribulose-phosphate 3-epimerase (RPE1) from Encephalitozoon cuniculi (strain GB-M1) (Microsporidian parasite).